The primary structure comprises 505 residues: Beta-agarase (505 aa).

A signal peptide spans 1–23 (MLKVIPWLLVTSSLVAIPTYIHA). E200 acts as the Proton donor in catalysis. E322 acts as the Nucleophile in catalysis.

This sequence belongs to the glycosyl hydrolase 86 family.

Its subcellular location is the secreted. It carries out the reaction Hydrolysis of (1-&gt;4)-beta-D-galactosidic linkages in agarose, giving the tetramer as the predominant product.. In terms of biological role, hydrolase that cleaves agar at the (1-&gt;4) linkage, producing tetrameric saccharide molecules. Is specific for agar and agarose and does not digest alginate or carrageenan. This chain is Beta-agarase, found in Pseudoalteromonas atlantica (Alteromonas atlantica).